A 282-amino-acid polypeptide reads, in one-letter code: Phosphatidylserine decarboxylase proenzyme (282 aa).

Active-site charge relay system; for autoendoproteolytic cleavage activity residues include D88, H145, and S248. The Schiff-base intermediate with substrate; via pyruvic acid; for decarboxylase activity role is filled by S248. S248 is subject to Pyruvic acid (Ser); by autocatalysis.

This sequence belongs to the phosphatidylserine decarboxylase family. PSD-B subfamily. Prokaryotic type I sub-subfamily. In terms of assembly, heterodimer of a large membrane-associated beta subunit and a small pyruvoyl-containing alpha subunit. Pyruvate serves as cofactor. Is synthesized initially as an inactive proenzyme. Formation of the active enzyme involves a self-maturation process in which the active site pyruvoyl group is generated from an internal serine residue via an autocatalytic post-translational modification. Two non-identical subunits are generated from the proenzyme in this reaction, and the pyruvate is formed at the N-terminus of the alpha chain, which is derived from the carboxyl end of the proenzyme. The autoendoproteolytic cleavage occurs by a canonical serine protease mechanism, in which the side chain hydroxyl group of the serine supplies its oxygen atom to form the C-terminus of the beta chain, while the remainder of the serine residue undergoes an oxidative deamination to produce ammonia and the pyruvoyl prosthetic group on the alpha chain. During this reaction, the Ser that is part of the protease active site of the proenzyme becomes the pyruvoyl prosthetic group, which constitutes an essential element of the active site of the mature decarboxylase.

It is found in the cell membrane. It catalyses the reaction a 1,2-diacyl-sn-glycero-3-phospho-L-serine + H(+) = a 1,2-diacyl-sn-glycero-3-phosphoethanolamine + CO2. It functions in the pathway phospholipid metabolism; phosphatidylethanolamine biosynthesis; phosphatidylethanolamine from CDP-diacylglycerol: step 2/2. In terms of biological role, catalyzes the formation of phosphatidylethanolamine (PtdEtn) from phosphatidylserine (PtdSer). The protein is Phosphatidylserine decarboxylase proenzyme of Dechloromonas aromatica (strain RCB).